The sequence spans 196 residues: ATP-dependent Clp protease proteolytic subunit (196 aa).

The active-site Nucleophile is Ser-101. The active site involves His-126.

This sequence belongs to the peptidase S14 family. As to quaternary structure, component of the chloroplastic Clp protease core complex.

The protein localises to the plastid. The protein resides in the chloroplast stroma. The catalysed reaction is Hydrolysis of proteins to small peptides in the presence of ATP and magnesium. alpha-casein is the usual test substrate. In the absence of ATP, only oligopeptides shorter than five residues are hydrolyzed (such as succinyl-Leu-Tyr-|-NHMec, and Leu-Tyr-Leu-|-Tyr-Trp, in which cleavage of the -Tyr-|-Leu- and -Tyr-|-Trp bonds also occurs).. In terms of biological role, cleaves peptides in various proteins in a process that requires ATP hydrolysis. Has a chymotrypsin-like activity. Plays a major role in the degradation of misfolded proteins. In Lepidium virginicum (Virginia pepperweed), this protein is ATP-dependent Clp protease proteolytic subunit.